Here is a 798-residue protein sequence, read N- to C-terminus: Probable serine/threonine-protein kinase DDB_G0276461 (798 aa).

Positions 54–324 (VTEVKLVAEG…DLLNYLNEIR (271 aa)) constitute a Protein kinase domain. ATP is bound by residues 60–68 (VAEGGFGFV) and lysine 82. The Proton acceptor role is filled by aspartate 185. Disordered regions lie at residues 330 to 538 (GLQT…NGNF), 553 to 645 (TNGS…SYNN), and 659 to 798 (SSAS…FGIL). Composition is skewed to low complexity over residues 335-406 (SSNN…NTPN), 429-490 (SNSN…NNNN), 506-538 (PSPS…NGNF), 557-603 (TNFE…INNS), 611-642 (SSGS…NSGS), and 659-678 (SSAS…NSWN). A compositionally biased stretch (polar residues) spans 679–697 (VTLTPSQSNKNSTGNLKPL). A compositionally biased stretch (low complexity) spans 698–716 (NNNNNNNNNNNNRFANNTN). Over residues 717 to 769 (SSRDYSFDFSSPNTSNNNDFGSFVQPSSSSSLNTTHFSKPNYNVNLNQTTSMT) the composition is skewed to polar residues. Residues 770-790 (NNYNNNNYNNNNNSNNNNNNS) show a composition bias toward low complexity.

The protein belongs to the protein kinase superfamily. Ser/Thr protein kinase family.

It carries out the reaction L-seryl-[protein] + ATP = O-phospho-L-seryl-[protein] + ADP + H(+). The catalysed reaction is L-threonyl-[protein] + ATP = O-phospho-L-threonyl-[protein] + ADP + H(+). This chain is Probable serine/threonine-protein kinase DDB_G0276461, found in Dictyostelium discoideum (Social amoeba).